Reading from the N-terminus, the 453-residue chain is MSFDLIIKNGTVILENEARVVDIAVKGGKIAAIGQDLGDAKEVMDASGLVVSPGMVDAHTHISEPGRSHWEGYETGTRAAAKGGITTMIEMPLNQLPATVDRASIELKFDAAKGKLTIDAAQLGGLVSYNIDRLHELDEVGVVGFKCFVATCGDRGIDNDFRDVNDWQFFKGAQKLGELGQPVLVHCENALICDELGEEAKREGRVTAHDYVASRPVFTEVEAIRRVLYLAKVAGCRLHVCHVSSPEGVEEVTRARQEGQDVTCESCPHYFVLDTDQFEEIGTLAKCSPPIRDLENQKGMWEKLFNGEIDCLVSDHSPCPPEMKAGNIMKAWGGIAGLQSCMDVMFDEAVQKRGMSLPMFGKLMATNAADIFGLQQKGRIAPGKDADFVFIQPNSSYVLTNDDLEYRHKVSPYVGRTIGARITKTILRGDVIYDIEQGFPVAPKGQFILKHQQ.

The Zn(2+) site is built by His-59, His-61, Lys-146, His-186, His-242, and Asp-315. The residue at position 146 (Lys-146) is an N6-carboxylysine.

Belongs to the metallo-dependent hydrolases superfamily. Allantoinase family. In terms of assembly, homotetramer. Zn(2+) is required as a cofactor. Post-translationally, carboxylation allows a single lysine to coordinate two zinc ions.

It carries out the reaction (S)-allantoin + H2O = allantoate + H(+). It functions in the pathway nitrogen metabolism; (S)-allantoin degradation; allantoate from (S)-allantoin: step 1/1. Functionally, catalyzes the conversion of allantoin (5-ureidohydantoin) to allantoic acid by hydrolytic cleavage of the five-member hydantoin ring. The sequence is that of Allantoinase from Escherichia coli (strain K12 / MC4100 / BW2952).